The chain runs to 242 residues: Neuromodulin (242 aa).

The interval 1-242 (MLCCMRRTKQ…EEREADQEHA (242 aa)) is disordered. 2 S-palmitoyl cysteine lipidation sites follow: Cys-3 and Cys-4. The segment covering 9–32 (KQVEKNDEDQKIEQDGIKPEDKAH) has biased composition (basic and acidic residues). The 30-residue stretch at 31 to 60 (AHKAATKIQASFRGHITRKKLKGEKKGDAQ) folds into the IQ domain. Position 41 is a phosphoserine; by PHK and PKC (Ser-41). 2 stretches are compositionally biased toward basic and acidic residues: residues 66–84 (GNEKDEAPVADGVEKKEGE) and 98–117 (KAEETGKAGETPSEEKKGEG). The span at 142-157 (ETESATKASTDNSPSS) shows a compositional bias: polar residues. Ser-154, Ser-156, and Ser-157 each carry phosphoserine. Over residues 158-170 (KAEDAPAKEEPKQ) the composition is skewed to basic and acidic residues. A compositionally biased stretch (low complexity) spans 171–203 (ADVPAAVTAAAAATTPAAEDAAAKATAQPPTDA). Thr-185 carries the phosphothreonine modification. Residues Ser-206 and Ser-207 each carry the phosphoserine; by CK2 modification. Over residues 209-242 (AEEKIEAVDETKPKESARQDEGKGEEREADQEHA) the composition is skewed to basic and acidic residues.

It belongs to the neuromodulin family. In terms of assembly, identified in a complex containing FGFR4, NCAM1, CDH2, PLCG1, FRS2, SRC, SHC1, GAP43 and CTTN. Interacts (via IQ domain) with calmodulin. Binds calmodulin with a greater affinity in the absence of Ca(2+) than in its presence. Post-translationally, phosphorylated. Phosphorylation of this protein by a protein kinase C is specifically correlated with certain forms of synaptic plasticity. Palmitoylated by ZDHHC3. Palmitoylation is regulated by ARF6 and is essential for plasma membrane association and axonal and dendritic filopodia induction. Deacylated by LYPLA2.

The protein resides in the cell membrane. It localises to the cell projection. The protein localises to the growth cone membrane. Its subcellular location is the synapse. It is found in the filopodium membrane. The protein resides in the perikaryon. It localises to the dendrite. The protein localises to the axon. Its subcellular location is the cytoplasm. This protein is associated with nerve growth. It is a major component of the motile 'growth cones' that form the tips of elongating axons. Plays a role in axonal and dendritic filopodia induction. The sequence is that of Neuromodulin (GAP43) from Felis catus (Cat).